Consider the following 316-residue polypeptide: Zinc finger protein 367 (316 aa).

The tract at residues 61 to 97 (VTLGPGSGSGAASPTRTSSSPAEADPLSCPEHLKDGI) is disordered. A compositionally biased stretch (low complexity) spans 70–82 (GAASPTRTSSSPA). 2 consecutive C2H2-type zinc fingers follow at residues 121 to 143 (IRCN…KRTH) and 149 to 173 (YLCD…QRLH). The segment at 234–294 (QTREQRSPVP…GGVVTARRRL (61 aa)) is disordered. The span at 255 to 278 (EDQEQQDPLDFLPSDEGEEEEQEE) shows a compositional bias: acidic residues. Residues 289–313 (TARRRLQEQRERLHGALALIELANN) are a coiled coil.

This sequence belongs to the krueppel C2H2-type zinc-finger protein family.

It is found in the nucleus. Functionally, transcriptional activator. The chain is Zinc finger protein 367 (znf367) from Danio rerio (Zebrafish).